A 292-amino-acid chain; its full sequence is G1/S-specific cyclin-D3 (292 aa).

The Cyclin N-terminal domain occupies V27–L152. Residues S254–L292 are disordered. S264 and S279 each carry phosphoserine. The segment covering G272–T285 has biased composition (low complexity). Position 283 is a phosphothreonine (T283).

Belongs to the cyclin family. Cyclin D subfamily. Interacts with the CDK4 and CDK6 protein kinases to form a serine/threonine kinase holoenzyme complex. The cyclin subunit imparts substrate specificity to the complex. Interacts with ATF5. Interacts with EIF3K. Component of the ternary complex cyclin D/CDK4/CDKN1B required for nuclear translocation and modulation of CDK4-mediated kinase activity. Can form similar complexes with either CDKN1A or CDKN2A. Post-translationally, phosphorylation at Thr-283 by MAP kinases is required for ubiquitination and degradation by the DCX(AMBRA1) complex. In terms of processing, ubiquitinated by the DCX(AMBRA1) complex during the transition from G1 to S cell phase, leading to its degradation: ubiquitination is dependent on Thr-283 phosphorylation. The DCX(AMBRA1) complex represents the major regulator of CCND3 stability during the G1/S transition. Polyubiquitinated by the SCF(FBXL2) complex, leading to proteasomal degradation.

It localises to the nucleus. The protein resides in the cytoplasm. Its function is as follows. Regulatory component of the cyclin D3-CDK4 (DC) complex that phosphorylates and inhibits members of the retinoblastoma (RB) protein family including RB1 and regulates the cell-cycle during G(1)/S transition. Phosphorylation of RB1 allows dissociation of the transcription factor E2F from the RB/E2F complex and the subsequent transcription of E2F target genes which are responsible for the progression through the G(1) phase. Hypophosphorylates RB1 in early G(1) phase. Cyclin D-CDK4 complexes are major integrators of various mitogenenic and antimitogenic signals. Component of the ternary complex, cyclin D3/CDK4/CDKN1B, required for nuclear translocation and activity of the cyclin D-CDK4 complex. Shows transcriptional coactivator activity with ATF5 independently of CDK4. The polypeptide is G1/S-specific cyclin-D3 (Homo sapiens (Human)).